Reading from the N-terminus, the 70-residue chain is Small ribosomal subunit protein bS21 (70 aa).

Belongs to the bacterial ribosomal protein bS21 family.

The sequence is that of Small ribosomal subunit protein bS21 from Laribacter hongkongensis (strain HLHK9).